A 68-amino-acid chain; its full sequence is DNA gyrase inhibitor YacG (68 aa).

The Zn(2+) site is built by cysteine 10, cysteine 13, cysteine 29, and cysteine 33. The tract at residues 45–68 is disordered; sequence EKRIPSDTELSDSDEWSEEDPLKH. Positions 53–68 are enriched in acidic residues; sequence ELSDSDEWSEEDPLKH.

It belongs to the DNA gyrase inhibitor YacG family. As to quaternary structure, interacts with GyrB. Zn(2+) is required as a cofactor.

Inhibits all the catalytic activities of DNA gyrase by preventing its interaction with DNA. Acts by binding directly to the C-terminal domain of GyrB, which probably disrupts DNA binding by the gyrase. The polypeptide is DNA gyrase inhibitor YacG (Yersinia pseudotuberculosis serotype O:1b (strain IP 31758)).